Reading from the N-terminus, the 271-residue chain is Mannosyl-3-phosphoglycerate phosphatase (271 aa).

Catalysis depends on Asp-13, which acts as the Nucleophile. Mg(2+)-binding residues include Asp-13, Asp-15, and Asp-214.

It belongs to the HAD-like hydrolase superfamily. MPGP family. The cofactor is Mg(2+).

Its subcellular location is the cytoplasm. It carries out the reaction 2-O-(alpha-D-mannosyl)-3-phosphoglycerate + H2O = (2R)-2-O-(alpha-D-mannosyl)-glycerate + phosphate. The polypeptide is Mannosyl-3-phosphoglycerate phosphatase (Escherichia coli (strain 55989 / EAEC)).